The sequence spans 807 residues: Ecotropic viral integration site 5 ortholog (807 aa).

The tract at residues M1 to L31 is disordered. A Phosphothreonine modification is found at T33. A phosphoserine mark is found at S58 and S64. The region spanning G116–G300 is the Rab-GAP TBC domain. Coiled coils occupy residues S352 to V463, C494 to R583, and R627 to F772.

Interacts with Rab11.

It is found in the cytoplasm. The protein localises to the endosome. Functionally, functions as a GTPase-activating protein (GAP). During border cell migration in the ovary, acts as a GAP for Rab11 and is necessary for the maintenance of active receptor tyrosine kinases at the leading edge. This chain is Ecotropic viral integration site 5 ortholog (Evi5), found in Drosophila melanogaster (Fruit fly).